The chain runs to 259 residues: MPRLLPVEACDLPEDYDPSVPPRTPQEYLRRVQIEAARCPDVVIAQIDPKKLRKKQTVSISLSGCQPAPDGYSPSLRWQQQQVAQFSAVRQSLHKHRGHWRSQPLDSNVTMPSTEDEESWKKFCLGERLYSDLAAALNSESQHPGIDYIKVGFPPLLSIVSRMSQATVTSVLEYLVNWFEERNFTPELGRWLYALLACLEKPLLPEAHSLIRQLARRCSQIRAGVEHKEDDRVSPLNLFICLVGRYFEQRDLADCGDPS.

This sequence belongs to the gemin-2 family. As to quaternary structure, forms a stable heteromeric complex with survival of motor neuron protein (SMN), GEMIN3 and GEMIN4. The SMN complex is associated with the spliceosomal snRNAs U1 and U5 in the cytoplasm of oocytes.

It localises to the nucleus. The protein localises to the gem. Its subcellular location is the cytoplasm. The SMN complex catalyzes the assembly of small nuclear ribonucleoproteins (snRNPs), the building blocks of the spliceosome, and thereby plays an important role in the splicing of cellular pre-mRNAs. Most spliceosomal snRNPs contain a common set of Sm proteins SNRPB, SNRPD1, SNRPD2, SNRPD3, SNRPE, SNRPF and SNRPG that assemble in a heptameric protein ring on the Sm site of the small nuclear RNA to form the core snRNP (Sm core). In the cytosol, the Sm proteins SNRPD1, SNRPD2, SNRPE, SNRPF and SNRPG (5Sm) are trapped in an inactive 6S pICln-Sm complex by the chaperone CLNS1A that controls the assembly of the core snRNP. To assemble core snRNPs, the SMN complex accepts the trapped 5Sm proteins from CLNS1A. Binding of snRNA inside 5Sm ultimately triggers eviction of the SMN complex, thereby allowing binding of SNRPD3 and SNRPB to complete assembly of the core snRNP. Within the SMN complex, GEMIN2 constrains the conformation of 5Sm, thereby promoting 5Sm binding to snRNA containing the snRNP code (a nonameric Sm site and a 3'-adjacent stem-loop), thus preventing progression of assembly until a cognate substrate is bound. This chain is Gem-associated protein 2 (gemin2), found in Xenopus laevis (African clawed frog).